A 188-amino-acid chain; its full sequence is MMRRVYSPVFCSVAAARFAATSAAKKYDLFGYEVDTNTAPWIEKIKKCKYYDEAGEVLVNMNVSNCPPDIATYNATLQCIYQSPSKQSTPVDNESKFCAMMDLLEEMQHRNRLKPNEESWTWVMKECVKSGQFRLGYCIQQVMETECKGCPADLVKANEANAQKAKTEGKEHPGHLSQQAGLFDVKVE.

A mitochondrion-targeting transit peptide spans 1-18 (MMRRVYSPVFCSVAAARF). PPR repeat units follow at residues 36-70 (TNTA…PPDI), 75-109 (ATLQ…EMQH), and 116-146 (NEES…METE).

As to quaternary structure, F-type ATPases have 2 components, F(1) - the catalytic core - and F(o) - the membrane proton channel. F(1) has five subunits: alpha(3), beta(3), gamma(1), delta(1), epsilon(1), plus the additional subunit P18 (Tb427.05.1710) that is not present in F(1)F(o) ATP synthase from metazoa. Subunit P18 (Tb927.5.1710) interacts with the alpha subunit with a 1:1 stoichiometry; the interaction is direct. Subunit gamma is part of the central stalk. F(o) has three main subunits: a, b and c. The trypanosomal ATPase complex contains additional subunits that are not present in the F(1)F(o) ATP synthase from metazoa.

The protein localises to the mitochondrion. The protein resides in the mitochondrion inner membrane. Functionally, mitochondrial membrane ATP synthase (F(1)F(o) ATP synthase) produces ATP from ADP in the presence of a proton gradient across the membrane which is generated by electron transport complexes of the respiratory chain. F-type ATPases consist of two structural domains, F(1) - containing the extramembraneous catalytic core, and F(o) - containing the membrane proton channel, linked together by a central stalk and a peripheral stalk. During catalysis, ATP synthesis in the catalytic domain of F(1) is coupled via a rotary mechanism of the central stalk subunits to proton translocation. Subunits alpha and beta form the catalytic core in F(1). Rotation of the central stalk against the surrounding alpha(3)beta(3) subunits leads to hydrolysis of ATP in three separate catalytic sites on the beta subunits. Contrary to the procyclic, insect form that requires F(1)F(o) ATP synthase for ATP synthesis, the bloodstream form relies on ATP hydrolysis by F(1)F(o) ATP synthase to maintain its mitochondrial membrane potential. This Trypanosoma brucei brucei protein is ATP synthase subunit p18, mitochondrial.